The sequence spans 159 residues: Large ribosomal subunit protein mL43 (159 aa).

The disordered stretch occupies residues 123–159 (SPSIQGQWHPFTNKPTALGGLRPREVQNPAPTQRPAQ).

This sequence belongs to the mitochondrion-specific ribosomal protein mL43 family. Component of the mitochondrial ribosome large subunit (39S) which comprises a 16S rRNA and about 50 distinct proteins.

It localises to the mitochondrion. In Bos taurus (Bovine), this protein is Large ribosomal subunit protein mL43 (MRPL43).